The primary structure comprises 84 residues: MDRLNVKEQEHLTQVLEAKQLKEYLNMYSTLTQNCFSDCVQDFTSSKLSNKESECIAKCADKFLKHSERVGQRFAEFNAKYMGQ.

Residues 35–59 (CFSDCVQDFTSSKLSNKESECIAKC) carry the Twin CX3C motif motif. Intrachain disulfides connect Cys-35/Cys-59 and Cys-39/Cys-55.

It belongs to the small Tim family. In terms of assembly, heterohexamer; composed of 3 copies of TIM9 and 3 copies of TIM10, named soluble 70 kDa complex. Associates with the TIM22 complex, whose core is composed of TIM22 and TIM54. Interacts with the transmembrane regions of multi-pass transmembrane proteins in transit.

The protein localises to the mitochondrion inner membrane. Its function is as follows. Mitochondrial intermembrane chaperone that participates in the import and insertion of multi-pass transmembrane proteins into the mitochondrial inner membrane. Also required for the transfer of beta-barrel precursors from the TOM complex to the sorting and assembly machinery (SAM complex) of the outer membrane. Acts as a chaperone-like protein that protects the hydrophobic precursors from aggregation and guide them through the mitochondrial intermembrane space. In Schizosaccharomyces pombe (strain 972 / ATCC 24843) (Fission yeast), this protein is Mitochondrial import inner membrane translocase subunit tim9 (tim9).